The following is a 616-amino-acid chain: Dihydroxy-acid dehydratase (616 aa).

Asp81 contributes to the Mg(2+) binding site. Cys122 serves as a coordination point for [2Fe-2S] cluster. Positions 123 and 124 each coordinate Mg(2+). At Lys124 the chain carries N6-carboxylysine. Cys195 is a [2Fe-2S] cluster binding site. Glu491 lines the Mg(2+) pocket. Catalysis depends on Ser517, which acts as the Proton acceptor.

It belongs to the IlvD/Edd family. As to quaternary structure, homodimer. It depends on [2Fe-2S] cluster as a cofactor. The cofactor is Mg(2+).

The catalysed reaction is (2R)-2,3-dihydroxy-3-methylbutanoate = 3-methyl-2-oxobutanoate + H2O. The enzyme catalyses (2R,3R)-2,3-dihydroxy-3-methylpentanoate = (S)-3-methyl-2-oxopentanoate + H2O. The protein operates within amino-acid biosynthesis; L-isoleucine biosynthesis; L-isoleucine from 2-oxobutanoate: step 3/4. Its pathway is amino-acid biosynthesis; L-valine biosynthesis; L-valine from pyruvate: step 3/4. In terms of biological role, functions in the biosynthesis of branched-chain amino acids. Catalyzes the dehydration of (2R,3R)-2,3-dihydroxy-3-methylpentanoate (2,3-dihydroxy-3-methylvalerate) into 2-oxo-3-methylpentanoate (2-oxo-3-methylvalerate) and of (2R)-2,3-dihydroxy-3-methylbutanoate (2,3-dihydroxyisovalerate) into 2-oxo-3-methylbutanoate (2-oxoisovalerate), the penultimate precursor to L-isoleucine and L-valine, respectively. In Salmonella newport (strain SL254), this protein is Dihydroxy-acid dehydratase.